We begin with the raw amino-acid sequence, 179 residues long: UPF0302 protein YpiB (179 aa).

Belongs to the UPF0302 family.

The polypeptide is UPF0302 protein YpiB (ypiB) (Bacillus subtilis (strain 168)).